The sequence spans 218 residues: Glutathione S-transferase Mu 1 (218 aa).

Residues 2-88 (PMILGYWDIR…YIARKHNLCG (87 aa)) enclose the GST N-terminal domain. Residue 7 to 8 (YW) coordinates glutathione. T34 is modified (phosphothreonine). Glutathione-binding positions include 43–46 (RSQW), K50, 59–60 (NL), and 72–73 (QS). Residues 90-208 (TEEEKIRVDI…KSSRFLPRPV (119 aa)) form the GST C-terminal domain. Residue Y116 coordinates substrate. Position 210 is a phosphoserine (S210).

The protein belongs to the GST superfamily. Mu family. Homodimer. Liver (at protein level).

It localises to the cytoplasm. It carries out the reaction RX + glutathione = an S-substituted glutathione + a halide anion + H(+). The catalysed reaction is prostaglandin A2 + glutathione = prostaglandin A2-S-(R)-glutathione. It catalyses the reaction prostaglandin J2 + glutathione = prostaglandin J2-S-(R)-glutathione. The enzyme catalyses prostaglandin J2 + glutathione = prostaglandin J2-S-(S)-glutathione. It carries out the reaction prostaglandin A2 + glutathione = prostaglandin A2-S-(S)-glutathione. The catalysed reaction is 11(S)-hydroxy-14(S),15(S)-epoxy-(5Z,8Z,12E)-eicosatrienoate + glutathione = (11S,15S)-dihydroxy-14(R)-S-glutathionyl-(5Z,8Z,12E)-eicosatrienoate. In terms of biological role, conjugation of reduced glutathione to a wide number of exogenous and endogenous hydrophobic electrophiles. Involved in the formation of glutathione conjugates of both prostaglandin A2 (PGA2) and prostaglandin J2 (PGJ2). Participates in the formation of novel hepoxilin regioisomers. This is Glutathione S-transferase Mu 1 from Homo sapiens (Human).